The primary structure comprises 142 residues: Small ribosomal subunit protein uS12 (142 aa).

This sequence belongs to the universal ribosomal protein uS12 family. As to quaternary structure, part of the 30S ribosomal subunit.

Functionally, with S4 and S5 plays an important role in translational accuracy. Located at the interface of the 30S and 50S subunits. This is Small ribosomal subunit protein uS12 from Methanococcoides burtonii (strain DSM 6242 / NBRC 107633 / OCM 468 / ACE-M).